A 38-amino-acid polypeptide reads, in one-letter code: Conotoxin r7a (38 aa).

Positions 1-5 (APAKR) are excised as a propeptide. Trp6 bears the 6'-bromotryptophan mark. 4-carboxyglutamate occurs at positions 10 and 11. Cystine bridges form between Cys12–Cys26, Cys19–Cys30, and Cys25–Cys35. Position 15 is a 6'-bromotryptophan (Trp15). Glu20 and Glu31 each carry 4-carboxyglutamate. Trp38 is subject to 6'-bromotryptophan.

This sequence belongs to the conotoxin O2 superfamily. As to expression, expressed by the venom duct.

The protein localises to the secreted. In terms of biological role, induces a sleep-like state in mice. This Conus radiatus (Rayed cone) protein is Conotoxin r7a.